The primary structure comprises 121 residues: uncharacterized protein (121 aa).

The first 23 residues, 1–23, serve as a signal peptide directing secretion; it reads MNFSTVFQAIIAVLGLTTVTALA. N68 and N84 each carry an N-linked (GlcNAc...) asparagine glycan.

N-glycosylated.

This is an uncharacterized protein from Saccharomyces cerevisiae (strain ATCC 204508 / S288c) (Baker's yeast).